The following is a 1435-amino-acid chain: RNA-directed RNA polymerase VP1 (1435 aa).

In terms of domain architecture, RdRp catalytic spans 604–880 (VLHNVLRPAY…KGVLGAPELF (277 aa)).

The protein belongs to the reoviridae RNA-directed RNA polymerase family. In terms of assembly, interacts with VP4.

It catalyses the reaction RNA(n) + a ribonucleoside 5'-triphosphate = RNA(n+1) + diphosphate. In terms of biological role, RNA-directed RNA polymerase involved in transcription and genome replication. Following infection, catalyzes the synthesis of fully conservative plus strands. After core assembly, which consists in recruitment of one capped plus-strand for each genomic segments and polymerase complexes, the polymerase switches mode and catalyzes the synthesis of complementary minus-strands. This Callospermophilus lateralis (Golden-mantled ground squirrel) protein is RNA-directed RNA polymerase VP1.